A 402-amino-acid polypeptide reads, in one-letter code: Alkaline proteinase (402 aa).

An N-terminal signal peptide occupies residues 1–20; sequence MVTLRRLAVLLGAIPAALAA. The propeptide occupies 21–120; it reads PTTQKREVVP…EQDEGEFSTA (100 aa). Positions 32-108 constitute an Inhibitor I9 domain; it reads KYIVTLKEGA…EVEEDQIWHL (77 aa). The Peptidase S8 domain occupies 128–402; it reads AWGLGTISHR…NRILYNGNGA (275 aa). Residues Asp160, His191, and Ser347 each act as charge relay system in the active site. The span at 382-392 shows a compositional bias: polar residues; it reads GRVSNPGSGSP. Residues 382-402 are disordered; the sequence is GRVSNPGSGSPNRILYNGNGA.

The protein belongs to the peptidase S8 family.

In Hapsidospora chrysogena (Acremonium chrysogenum), this protein is Alkaline proteinase (ALP).